The primary structure comprises 118 residues: Hydrogenase maturation factor HypA (118 aa).

A Ni(2+)-binding site is contributed by His-2. The Zn(2+) site is built by Cys-74, Cys-77, Cys-91, and Cys-94.

The protein belongs to the HypA/HybF family.

In terms of biological role, involved in the maturation of [NiFe] hydrogenases. Required for nickel insertion into the metal center of the hydrogenase. This chain is Hydrogenase maturation factor HypA, found in Helicobacter hepaticus (strain ATCC 51449 / 3B1).